The sequence spans 275 residues: Prohibitin-1 (275 aa).

Residues Y106–L109 carry the AIM motif.

Belongs to the prohibitin family. The mitochondrial prohibitin complex consists of two subunits (PHB1 and PHB2). The subunits assemble into a membrane-associated ring-shaped supercomplex of approximately 1 mDa. Interacts with ATG24/SNX4; the interaction is direct and plays a role in mitophagy.

Its subcellular location is the mitochondrion inner membrane. In terms of biological role, prohibitin probably acts as a holdase/unfoldase for the stabilization of newly synthesized mitochondrial proteins. Involved in mitophagy. Required for the switch to necrotrophic growth. The polypeptide is Prohibitin-1 (Colletotrichum higginsianum (strain IMI 349063) (Crucifer anthracnose fungus)).